Consider the following 621-residue polypeptide: Chaperone protein dnaK (621 aa).

The interval V597–A621 is disordered.

The protein belongs to the heat shock protein 70 family.

It localises to the plastid. It is found in the chloroplast. Its function is as follows. Acts as a chaperone. The chain is Chaperone protein dnaK from Gracilaria tenuistipitata var. liui (Red alga).